The chain runs to 113 residues: Large ribosomal subunit protein uL22 (113 aa).

The protein belongs to the universal ribosomal protein uL22 family. As to quaternary structure, part of the 50S ribosomal subunit.

Its function is as follows. This protein binds specifically to 23S rRNA; its binding is stimulated by other ribosomal proteins, e.g. L4, L17, and L20. It is important during the early stages of 50S assembly. It makes multiple contacts with different domains of the 23S rRNA in the assembled 50S subunit and ribosome. Functionally, the globular domain of the protein is located near the polypeptide exit tunnel on the outside of the subunit, while an extended beta-hairpin is found that lines the wall of the exit tunnel in the center of the 70S ribosome. The chain is Large ribosomal subunit protein uL22 from Trichlorobacter lovleyi (strain ATCC BAA-1151 / DSM 17278 / SZ) (Geobacter lovleyi).